The sequence spans 858 residues: DNA mismatch repair protein MutS (858 aa).

603–610 serves as a coordination point for ATP; that stretch reads GPNMSGKS.

Belongs to the DNA mismatch repair MutS family.

In terms of biological role, this protein is involved in the repair of mismatches in DNA. It is possible that it carries out the mismatch recognition step. This protein has a weak ATPase activity. The protein is DNA mismatch repair protein MutS of Streptococcus agalactiae serotype Ia (strain ATCC 27591 / A909 / CDC SS700).